A 573-amino-acid chain; its full sequence is E3 ubiquitin-protein ligase RNF168 (573 aa).

The RING-type zinc-finger motif lies at 16-55 (CQICVEILFEPVTLPCNHTLCKPCFESTVEKASLCCPFCR). The residue at position 70 (Ser-70) is a Phosphoserine. The LR motif 1 signature appears at 110–128 (LSKPGELRREYEEEISKVE). Residues 143 to 151 (EEYIQKLLA) carry the UMI motif motif. Disordered stretches follow at residues 153–174 (EEEEEKRQAEKRHREMEEQLKS) and 196–277 (ASPL…EDMP). A compositionally biased stretch (basic and acidic residues) spans 157–174 (EKRQAEKRHREMEEQLKS). The short motif at 168 to 191 (MEEQLKSDEELARRLSLDINNFCE) is the MIU motif 1 element. Ser-197 carries the post-translational modification Phosphoserine. A Glycyl lysine isopeptide (Lys-Gly) (interchain with G-Cter in SUMO2) cross-link involves residue Lys-210. Residues 231 to 243 (PKSQLGSASQSEV) show a composition bias toward polar residues. Basic and acidic residues predominate over residues 245–261 (QEDRKSSMSKKIDDNSD). Thr-363 is subject to Phosphothreonine. At Ser-416 the chain carries Phosphoserine. The MIU motif 2 signature appears at 440 to 463 (RHKQEKQDRLLALQLQEEVDQEQM). The interval 456–528 (EEVDQEQMRP…NHQQPSFKIQ (73 aa)) is disordered. Over residues 461-470 (EQMRPDRQKG) the composition is skewed to basic and acidic residues. Residues 467–478 (RQKGSPDGYQLR) carry the LR motif 2 motif. Ser-471 carries the phosphoserine modification. The span at 494-519 (NSRDRNSKRQTELEQPKPRTDSKNEN) shows a compositional bias: basic and acidic residues. Lys-530 participates in a covalent cross-link: Glycyl lysine isopeptide (Lys-Gly) (interchain with G-Cter in SUMO2). Residues 540-573 (NSTNDNCNVSKTAHSLQPSKSQKSIFQMFQRVTK) are disordered.

The protein belongs to the RNF168 family. As to quaternary structure, monomer. Interacts with UBE2N/UBC13. In terms of processing, sumoylated with SUMO1 by PIAS4 in response to double-strand breaks (DSBs). Post-translationally, ubiquitinated.

Its subcellular location is the nucleus. The enzyme catalyses S-ubiquitinyl-[E2 ubiquitin-conjugating enzyme]-L-cysteine + [acceptor protein]-L-lysine = [E2 ubiquitin-conjugating enzyme]-L-cysteine + N(6)-ubiquitinyl-[acceptor protein]-L-lysine.. The protein operates within protein modification; protein ubiquitination. Functionally, E3 ubiquitin-protein ligase required for accumulation of repair proteins to sites of DNA damage. Acts with UBE2N/UBC13 to amplify the RNF8-dependent histone ubiquitination. Recruited to sites of DNA damage at double-strand breaks (DSBs) by binding to ubiquitinated histone H2A and H2AX and amplifies the RNF8-dependent H2A ubiquitination, promoting the formation of 'Lys-63'-linked ubiquitin conjugates. This leads to concentrate ubiquitinated histones H2A and H2AX at DNA lesions to the threshold required for recruitment of TP53BP1 and BRCA1. Also recruited at DNA interstrand cross-links (ICLs) sites and promotes accumulation of 'Lys-63'-linked ubiquitination of histones H2A and H2AX, leading to recruitment of FAAP20 and Fanconi anemia (FA) complex, followed by interstrand cross-link repair. H2A ubiquitination also mediates the ATM-dependent transcriptional silencing at regions flanking DSBs in cis, a mechanism to avoid collision between transcription and repair intermediates. Also involved in class switch recombination in immune system, via its role in regulation of DSBs repair. Following DNA damage, promotes the ubiquitination and degradation of JMJD2A/KDM4A in collaboration with RNF8, leading to unmask H4K20me2 mark and promote the recruitment of TP53BP1 at DNA damage sites. Not able to initiate 'Lys-63'-linked ubiquitination in vitro; possibly due to partial occlusion of the UBE2N/UBC13-binding region. Catalyzes monoubiquitination of 'Lys-13' and 'Lys-15' of nucleosomal histone H2A (H2AK13Ub and H2AK15Ub, respectively). This Bos taurus (Bovine) protein is E3 ubiquitin-protein ligase RNF168.